Reading from the N-terminus, the 300-residue chain is Ribonuclease HIII (300 aa).

The RNase H type-2 domain occupies Arg-86–Gln-300. The a divalent metal cation site is built by Asp-92, Glu-93, and Asp-196.

Belongs to the RNase HII family. RnhC subfamily. Requires Mn(2+) as cofactor. It depends on Mg(2+) as a cofactor.

The protein resides in the cytoplasm. The catalysed reaction is Endonucleolytic cleavage to 5'-phosphomonoester.. Functionally, endonuclease that specifically degrades the RNA of RNA-DNA hybrids. The polypeptide is Ribonuclease HIII (Chlamydia trachomatis serovar A (strain ATCC VR-571B / DSM 19440 / HAR-13)).